We begin with the raw amino-acid sequence, 890 residues long: UPF0182 protein Ppro_2689 (890 aa).

7 helical membrane-spanning segments follow: residues 6–26 (FILILVIVALTVSLLSFLLAF), 50–70 (AGSGLLFAGVLFAGTLLNLLL), 102–122 (LGIPACAILALLVGQWGAMQW), 157–177 (TITAFAGFTLLTSLFLTVLVY), 200–220 (LAILLLLLSCVIAAGFHLDCF), 244–264 (TYRILTILAPLAGTALAIGLW), and 266–286 (GAWRMALLAPLAVIVLHVIGI).

The protein belongs to the UPF0182 family.

The protein resides in the cell membrane. In Pelobacter propionicus (strain DSM 2379 / NBRC 103807 / OttBd1), this protein is UPF0182 protein Ppro_2689.